We begin with the raw amino-acid sequence, 230 residues long: Ropporin-1-like protein (230 aa).

One can recognise an RIIa domain in the interval 17–46 (PELPDILKQFTKAAIRTQPADVLRWSAGYF).

This sequence belongs to the ropporin family. Component of the axonemal radial spoke complex 1 (RS1), at least composed of spoke head proteins RSPH1, RSPH3, RSPH9 and the cilia-specific component RSPH4A or sperm-specific component RSPH6A, spoke stalk proteins RSPH14, DNAJB13, DYDC1, ROPN1L and NME5, and the anchor protein IQUB. Interacts with FSCB; the interaction increases upon spermatozoa capacitation conditions. May interact with AKAP3. Interacts with CFAP61. Post-translationally, sumoylated, sumoylation decreases upon spermatozoa capacitation conditions.

It localises to the cell projection. The protein localises to the cilium. The protein resides in the flagellum. Its function is as follows. Functions as part of axonemal radial spoke complexes that play an important part in the motility of sperm and cilia. Important for male fertility. With ROPN1, involved in fibrous sheath integrity and sperm motility, plays a role in PKA-dependent signaling processes required for spermatozoa capacitation. This chain is Ropporin-1-like protein (ROPN1L), found in Homo sapiens (Human).